Consider the following 246-residue polypeptide: Octanoyltransferase (246 aa).

A BPL/LPL catalytic domain is found at Gly46–Glu234. Substrate-binding positions include Arg85–His92, Ala165–Gly167, and Gly178–Ala180. Cys196 acts as the Acyl-thioester intermediate in catalysis.

The protein belongs to the LipB family.

It localises to the cytoplasm. It catalyses the reaction octanoyl-[ACP] + L-lysyl-[protein] = N(6)-octanoyl-L-lysyl-[protein] + holo-[ACP] + H(+). It functions in the pathway protein modification; protein lipoylation via endogenous pathway; protein N(6)-(lipoyl)lysine from octanoyl-[acyl-carrier-protein]: step 1/2. Its function is as follows. Catalyzes the transfer of endogenously produced octanoic acid from octanoyl-acyl-carrier-protein onto the lipoyl domains of lipoate-dependent enzymes. Lipoyl-ACP can also act as a substrate although octanoyl-ACP is likely to be the physiological substrate. The polypeptide is Octanoyltransferase (Chelativorans sp. (strain BNC1)).